Here is a 140-residue protein sequence, read N- to C-terminus: Putative pre-16S rRNA nuclease (140 aa).

It belongs to the YqgF nuclease family.

The protein resides in the cytoplasm. Could be a nuclease involved in processing of the 5'-end of pre-16S rRNA. This chain is Putative pre-16S rRNA nuclease, found in Edwardsiella ictaluri (strain 93-146).